The following is a 278-amino-acid chain: Rhomboid protease GlpG (278 aa).

A run of 6 helical transmembrane segments spans residues 94-114, 143-163, 175-195, 196-216, 224-241, and 245-267; these read AGPL…LMLI, AFLH…WYLG, LLVL…LFSG, ANFG…WLTG, ISLP…LIAG, and ILGL…LMAF. The Nucleophile role is filled by serine 202. Residue histidine 255 is part of the active site.

Belongs to the peptidase S54 family.

The protein localises to the cell inner membrane. The catalysed reaction is Cleaves type-1 transmembrane domains using a catalytic dyad composed of serine and histidine that are contributed by different transmembrane domains.. Rhomboid-type serine protease that catalyzes intramembrane proteolysis. This chain is Rhomboid protease GlpG, found in Yersinia pestis bv. Antiqua (strain Antiqua).